The primary structure comprises 734 residues: Photosystem I P700 chlorophyll a apoprotein A2 (734 aa).

Transmembrane regions (helical) follow at residues I46–A69, L135–Q158, L175–I199, M273–Y291, L330–Y353, A369–I395, A417–H439, and F517–V535. C559 and C568 together coordinate [4Fe-4S] cluster. 2 helical membrane-spanning segments follow: residues A575 to W596 and L643 to I665. Chlorophyll a-binding residues include H654, M662, and Y670. W671 is a binding site for phylloquinone. The helical transmembrane segment at L707–A727 threads the bilayer.

The protein belongs to the PsaA/PsaB family. The PsaA/B heterodimer binds the P700 chlorophyll special pair and subsequent electron acceptors. PSI consists of a core antenna complex that captures photons, and an electron transfer chain that converts photonic excitation into a charge separation. The eukaryotic PSI reaction center is composed of at least 11 subunits. The cofactor is P700 is a chlorophyll a/chlorophyll a' dimer, A0 is one or more chlorophyll a, A1 is one or both phylloquinones and FX is a shared 4Fe-4S iron-sulfur center..

The protein resides in the plastid. Its subcellular location is the chloroplast thylakoid membrane. It carries out the reaction reduced [plastocyanin] + hnu + oxidized [2Fe-2S]-[ferredoxin] = oxidized [plastocyanin] + reduced [2Fe-2S]-[ferredoxin]. In terms of biological role, psaA and PsaB bind P700, the primary electron donor of photosystem I (PSI), as well as the electron acceptors A0, A1 and FX. PSI is a plastocyanin/cytochrome c6-ferredoxin oxidoreductase, converting photonic excitation into a charge separation, which transfers an electron from the donor P700 chlorophyll pair to the spectroscopically characterized acceptors A0, A1, FX, FA and FB in turn. Oxidized P700 is reduced on the lumenal side of the thylakoid membrane by plastocyanin or cytochrome c6. The polypeptide is Photosystem I P700 chlorophyll a apoprotein A2 (Gracilaria tenuistipitata var. liui (Red alga)).